The sequence spans 230 residues: Cyclin-dependent kinase inhibitor rum1 (230 aa).

3 disordered regions span residues 1 to 25, 43 to 118, and 188 to 230; these read MEPS…SFKG, PESD…DGLY, and SRVP…NLLR. Phosphothreonine; by MAPK is present on T13. A Phosphoserine; by MAPK modification is found at S19. Phosphothreonine; by cdc2 occurs at positions 58 and 62. Residues 67–147 form a CDK inhibitory and cyclin-binding region; sequence LLPNLMLQDR…TFKPKLLFAD (81 aa). A compositionally biased stretch (basic and acidic residues) spans 78–91; that stretch reads NSLERCMEEDREHN. Polar residues predominate over residues 93–102; sequence FLSSSDNQLL. The interval 101-230 is required for activity as a cdc2 kinase inhibitor; that stretch reads LLSRKKRKPT…KDENRHNLLR (130 aa). Residues 188–199 are compositionally biased toward low complexity; sequence SRVPSSSSGSFV. A compositionally biased stretch (basic and acidic residues) spans 219–230; sequence NTKDENRHNLLR.

As to quaternary structure, interacts with cdc13, cig2 and pop1. Post-translationally, phosphorylated by cig1-associated cdc2 which leads to increased stability. Phosphorylation by MAPK reduces cdc2 kinase inhibitor ability.

It localises to the nucleus. Functionally, regulator of cell cycle G1 phase progression. Ensures the correct sequence of S phase and mitosis in the cell by acting as an inhibitor of the cdc2 mitotic kinase. Probably interacts with cdc2 to inhibit its action until the cell mass for Start is reached. Determines the length of the pre-Start G1 period and prevents mitosis from happening in early G1 cells. Required for maintaining pheromone-induced G1 arrest. Acts as an adapter protein since interaction with cdc13 promotes cyclin proteolysis during G1. Becomes a target for degradation at the G1/S phase transition, following phosphorylation by cig1-associated cdc2 at the G1/S phase transition. This chain is Cyclin-dependent kinase inhibitor rum1 (rum1), found in Schizosaccharomyces pombe (strain 972 / ATCC 24843) (Fission yeast).